Here is a 417-residue protein sequence, read N- to C-terminus: UDP-N-acetylglucosamine 1-carboxyvinyltransferase (417 aa).

22–23 (KN) contributes to the phosphoenolpyruvate binding site. A UDP-N-acetyl-alpha-D-glucosamine-binding site is contributed by R93. C117 (proton donor) is an active-site residue. The residue at position 117 (C117) is a 2-(S-cysteinyl)pyruvic acid O-phosphothioketal. Residues 122–126 (RPVDQ), D305, and I327 contribute to the UDP-N-acetyl-alpha-D-glucosamine site.

It belongs to the EPSP synthase family. MurA subfamily.

Its subcellular location is the cytoplasm. The enzyme catalyses phosphoenolpyruvate + UDP-N-acetyl-alpha-D-glucosamine = UDP-N-acetyl-3-O-(1-carboxyvinyl)-alpha-D-glucosamine + phosphate. Its pathway is cell wall biogenesis; peptidoglycan biosynthesis. Cell wall formation. Adds enolpyruvyl to UDP-N-acetylglucosamine. The sequence is that of UDP-N-acetylglucosamine 1-carboxyvinyltransferase from Nitrosomonas eutropha (strain DSM 101675 / C91 / Nm57).